We begin with the raw amino-acid sequence, 177 residues long: Nuclear export protein (177 aa).

2 short sequence motifs (nuclear export signal) span residues 91 to 100 (LWLPMKSLSL) and 117 to 127 (MKHQILTRLKL).

Binds M1 protein. May interact with human nucleoporins and exportin XPO1/CRM1.

It localises to the virion. The protein localises to the host nucleus. Functionally, mediates the nuclear export of encapsidated genomic RNAs (ribonucleoproteins, RNPs). Acts as an adapter between viral RNPs complexes and the nuclear export machinery of the cell. Possesses no intrinsic RNA-binding activity, but includes a C-terminal M1-binding domain. This domain is believed to allow recognition of RNPs to which the M1 protein is bound. Because the M1 protein is not available in large quantities until the later stages of infection, such an indirect recognition mechanism probably ensures that genomic RNPs are not exported from the nucleus before sufficient quantities of viral mRNA and progeny genomic RNA have been synthesized. Furthermore, the RNPs enters the cytoplasm only when they have associated with the M1 protein that is necessary to guide them to the plasma membrane. May down-regulate viral RNA synthesis when overproduced. In Homo sapiens (Human), this protein is Nuclear export protein (NS).